The sequence spans 540 residues: Chaperonin GroEL (540 aa).

ATP contacts are provided by residues 29 to 32 (TLGP), 86 to 90 (DGTTT), Gly413, 476 to 478 (NAA), and Asp492.

Belongs to the chaperonin (HSP60) family. In terms of assembly, forms a cylinder of 14 subunits composed of two heptameric rings stacked back-to-back. Interacts with the co-chaperonin GroES.

The protein resides in the cytoplasm. It catalyses the reaction ATP + H2O + a folded polypeptide = ADP + phosphate + an unfolded polypeptide.. Together with its co-chaperonin GroES, plays an essential role in assisting protein folding. The GroEL-GroES system forms a nano-cage that allows encapsulation of the non-native substrate proteins and provides a physical environment optimized to promote and accelerate protein folding. The sequence is that of Chaperonin GroEL from Streptococcus pneumoniae (strain ATCC 700669 / Spain 23F-1).